The primary structure comprises 508 residues: Protein O-glucosyltransferase 3 (508 aa).

The first 24 residues, 1–24 (MLGVRRALLLPPLQLALLVAAGTG), serve as a signal peptide directing secretion. The Filamin repeat unit spans residues 25 to 134 (ARVSAPRSLA…VAQSPYILKG (110 aa)). Asn307 carries an N-linked (GlcNAc...) asparagine glycan. The disordered stretch occupies residues 480–508 (RDGMERVPQPDDSTSVRQCHRKRPEREEL). A Prevents secretion from ER motif is present at residues 505–508 (REEL).

It belongs to the KDELC family.

The protein resides in the endoplasmic reticulum lumen. The catalysed reaction is L-seryl-[EGF-like domain protein] + UDP-alpha-D-glucose = 3-O-(beta-D-glucosyl)-L-seryl-[EGF-like domain protein] + UDP + H(+). It catalyses the reaction L-seryl-[EGF-like domain protein] + UDP-alpha-D-xylose = 3-O-(beta-D-xylosyl)-L-seryl-[EGF-like domain protein] + UDP + H(+). It participates in protein modification; protein glycosylation. Functionally, protein glucosyltransferase that catalyzes the transfer of glucose from UDP-glucose to a serine residue within the consensus sequence peptide C-X-N-T-X-G-S-F-X-C. Can also catalyze the transfer of xylose from UDP-xylose but less efficiently. Specifically targets extracellular EGF repeats of proteins such as NOTCH1, NOTCH3, FBN1, FBN2 and LTBP1. May regulate the transport of NOTCH1 and NOTCH3 to the plasma membrane and thereby the Notch signaling pathway. This chain is Protein O-glucosyltransferase 3 (Poglut3), found in Rattus norvegicus (Rat).